Reading from the N-terminus, the 110-residue chain is UPF0122 protein SGO_1122 (110 aa).

It belongs to the UPF0122 family.

Its function is as follows. Might take part in the signal recognition particle (SRP) pathway. This is inferred from the conservation of its genetic proximity to ftsY/ffh. May be a regulatory protein. The polypeptide is UPF0122 protein SGO_1122 (Streptococcus gordonii (strain Challis / ATCC 35105 / BCRC 15272 / CH1 / DL1 / V288)).